The chain runs to 117 residues: GLIGSPVATYAAAPVAVAKTVVADEYDPHPQYQYGYDVQDGLTGDSKSQIESRSGDVVQGSYSLVDPDGTRRTVEYTADPINGFNAVVHREPLVAKAVVAAHAPVVHAAPVAKIAHF.

Repeat unit 1 spans residues A12–V15. Positions H29–A95 constitute a Chitin-binding type R&amp;R domain. Repeat unit 2 spans residues A108–V111.

Component of the cuticle of the larva of Tenebrio molitor. This is Larval cuticle protein A2B from Tenebrio molitor (Yellow mealworm beetle).